Here is a 209-residue protein sequence, read N- to C-terminus: Uracil phosphoribosyltransferase (209 aa).

5-phospho-alpha-D-ribose 1-diphosphate-binding positions include R79, R104, and 131-139; that span reads DPMLATGGS. Uracil contacts are provided by residues I194 and 199–201; that span reads GDA. A 5-phospho-alpha-D-ribose 1-diphosphate-binding site is contributed by D200.

The protein belongs to the UPRTase family. It depends on Mg(2+) as a cofactor.

The catalysed reaction is UMP + diphosphate = 5-phospho-alpha-D-ribose 1-diphosphate + uracil. Its pathway is pyrimidine metabolism; UMP biosynthesis via salvage pathway; UMP from uracil: step 1/1. With respect to regulation, allosterically activated by GTP. Catalyzes the conversion of uracil and 5-phospho-alpha-D-ribose 1-diphosphate (PRPP) to UMP and diphosphate. In Clostridium botulinum (strain Alaska E43 / Type E3), this protein is Uracil phosphoribosyltransferase.